A 332-amino-acid chain; its full sequence is Leucine carboxyl methyltransferase 1 (332 aa).

A disordered region spans residues 1–23 (MAASLRRPSFTTCSSPTDTDDEG). S-adenosyl-L-methionine contacts are provided by residues Arg-71, Gly-96, Asp-120, 169–170 (DL), and Glu-196.

The protein belongs to the methyltransferase superfamily. LCMT family.

It carries out the reaction [phosphatase 2A protein]-C-terminal L-leucine + S-adenosyl-L-methionine = [phosphatase 2A protein]-C-terminal L-leucine methyl ester + S-adenosyl-L-homocysteine. In terms of biological role, methylates the carboxyl group of the C-terminal leucine residue of protein phosphatase 2A catalytic subunits to form alpha-leucine ester residues. In Bos taurus (Bovine), this protein is Leucine carboxyl methyltransferase 1 (LCMT1).